Consider the following 226-residue polypeptide: Neuromodulin (226 aa).

Residues 1 to 226 are disordered; it reads MLCCMRRTKQ…EDPEADQEHA (226 aa). Residues cysteine 3 and cysteine 4 are each lipidated (S-palmitoyl cysteine). Over residues 9–32 the composition is skewed to basic and acidic residues; that stretch reads KQVEKNDEDQKIEQDGVKPEDKAH. The IQ domain maps to 31–60; sequence AHKAATKIQASFRGHITRKKLKDEKKGDAP. Residue serine 41 is modified to Phosphoserine; by PHK and PKC. Basic and acidic residues predominate over residues 51–84; that stretch reads LKDEKKGDAPAAEAEAKEKDDAPVADGVEKKEGD. Low complexity predominate over residues 85 to 97; it reads GSATTDAAPATSP. A phosphoserine mark is found at serine 86 and serine 96. The span at 98 to 127 shows a compositional bias: basic and acidic residues; that stretch reads KAEEPSKAGDAPSEEKKGEGDAAPSEEKAG. The segment covering 128-139 has biased composition (low complexity); sequence SAETESAAKATT. Phosphoserine occurs at positions 142, 144, and 145. A compositionally biased stretch (basic and acidic residues) spans 146–158; sequence KAEDGPAKEEPKQ. Over residues 159–192 the composition is skewed to low complexity; it reads ADVPAAVTDAAATTPAAEDAAKAAQPPTETAESS. Phosphothreonine is present on threonine 172. Residues serine 191 and serine 192 each carry the phosphoserine modification. Residues 201–214 are compositionally biased toward basic and acidic residues; that stretch reads VDEAKPKESARQDE. Over residues 215–226 the composition is skewed to acidic residues; sequence GKEDPEADQEHA.

It belongs to the neuromodulin family. As to quaternary structure, identified in a complex containing FGFR4, NCAM1, CDH2, PLCG1, FRS2, SRC, SHC1, GAP43 and CTTN. Interacts (via IQ domain) with calmodulin. Binds calmodulin with a greater affinity in the absence of Ca(2+) than in its presence. Post-translationally, phosphorylated. Phosphorylation of this protein by a protein kinase C is specifically correlated with certain forms of synaptic plasticity. In terms of processing, palmitoylated by ZDHHC3. Palmitoylation is regulated by ARF6 and is essential for plasma membrane association and axonal and dendritic filopodia induction. Deacylated by LYPLA2. In terms of tissue distribution, expressed in hippocampal neurons, with highest levels of expression in the CA4 and CA3 neurons and lower levels in CA1 neurons. Expressed in the dorsal root ganglion.

It localises to the cell membrane. The protein localises to the cell projection. The protein resides in the growth cone. Its subcellular location is the growth cone membrane. It is found in the synapse. It localises to the filopodium membrane. The protein localises to the perikaryon. The protein resides in the dendrite. Its subcellular location is the axon. It is found in the cytoplasm. In terms of biological role, this protein is associated with nerve growth. It is a major component of the motile 'growth cones' that form the tips of elongating axons. Plays a role in axonal and dendritic filopodia induction. The protein is Neuromodulin (Gap43) of Rattus norvegicus (Rat).